The primary structure comprises 347 residues: NADH-ubiquinone oxidoreductase chain 2 (347 aa).

10 consecutive transmembrane segments (helical) span residues 3-23 (PLAL…TMMS), 25-45 (HWLT…PILM), 59-79 (YFMT…INLM), 93-115 (VASN…HFWV), 150-170 (NTNL…WGGL), 178-198 (ILAY…PFNP), 200-220 (LTLL…MILA), 240-260 (MTIM…LSGF), 274-294 (NSII…YFYM), and 326-346 (LPTL…ISML).

This sequence belongs to the complex I subunit 2 family. Core subunit of respiratory chain NADH dehydrogenase (Complex I) which is composed of 45 different subunits. Interacts with TMEM242.

It is found in the mitochondrion inner membrane. It catalyses the reaction a ubiquinone + NADH + 5 H(+)(in) = a ubiquinol + NAD(+) + 4 H(+)(out). Core subunit of the mitochondrial membrane respiratory chain NADH dehydrogenase (Complex I) which catalyzes electron transfer from NADH through the respiratory chain, using ubiquinone as an electron acceptor. Essential for the catalytic activity and assembly of complex I. The polypeptide is NADH-ubiquinone oxidoreductase chain 2 (Mammuthus primigenius (Siberian woolly mammoth)).